Here is a 161-residue protein sequence, read N- to C-terminus: Probable chemoreceptor glutamine deamidase CheD (161 aa).

It belongs to the CheD family.

It carries out the reaction L-glutaminyl-[protein] + H2O = L-glutamyl-[protein] + NH4(+). In terms of biological role, probably deamidates glutamine residues to glutamate on methyl-accepting chemotaxis receptors (MCPs), playing an important role in chemotaxis. In Thermococcus kodakarensis (strain ATCC BAA-918 / JCM 12380 / KOD1) (Pyrococcus kodakaraensis (strain KOD1)), this protein is Probable chemoreceptor glutamine deamidase CheD.